A 579-amino-acid chain; its full sequence is UPF0324 membrane protein DVU_2133 (579 aa).

The next 11 membrane-spanning stretches (helical) occupy residues 26 to 45 (YWAI…LFLA), 193 to 215 (PFNI…AVGM), 225 to 243 (FLVG…LMMG), 250 to 272 (YWGI…TVGT), 305 to 327 (IGIP…TFIF), 369 to 391 (LTLA…PAFI), 401 to 423 (GGAW…AFLG), 436 to 456 (IQNV…CARV), 476 to 495 (FVLG…GSLG), 515 to 534 (LRNW…TNFR), and 549 to 571 (YVAG…FYIV).

Belongs to the UPF0324 family.

It is found in the cell membrane. This Nitratidesulfovibrio vulgaris (strain ATCC 29579 / DSM 644 / CCUG 34227 / NCIMB 8303 / VKM B-1760 / Hildenborough) (Desulfovibrio vulgaris) protein is UPF0324 membrane protein DVU_2133.